A 595-amino-acid chain; its full sequence is Aspartate--tRNA(Asp/Asn) ligase (595 aa).

An L-aspartate-binding site is contributed by Glu-175. The interval 199–202 (QQYK) is aspartate. Residues Arg-221 and His-454 each contribute to the L-aspartate site. Residue 221–223 (RDE) coordinates ATP. Residue Glu-488 coordinates ATP. Position 495 (Arg-495) interacts with L-aspartate. 540 to 543 (GIDR) provides a ligand contact to ATP.

This sequence belongs to the class-II aminoacyl-tRNA synthetase family. Type 1 subfamily. In terms of assembly, homodimer.

The protein resides in the cytoplasm. The enzyme catalyses tRNA(Asx) + L-aspartate + ATP = L-aspartyl-tRNA(Asx) + AMP + diphosphate. Its function is as follows. Aspartyl-tRNA synthetase with relaxed tRNA specificity since it is able to aspartylate not only its cognate tRNA(Asp) but also tRNA(Asn). Reaction proceeds in two steps: L-aspartate is first activated by ATP to form Asp-AMP and then transferred to the acceptor end of tRNA(Asp/Asn). This chain is Aspartate--tRNA(Asp/Asn) ligase, found in Brucella canis (strain ATCC 23365 / NCTC 10854 / RM-666).